Reading from the N-terminus, the 142-residue chain is Large ribosomal subunit protein uL13 (142 aa).

The protein belongs to the universal ribosomal protein uL13 family. As to quaternary structure, part of the 50S ribosomal subunit.

In terms of biological role, this protein is one of the early assembly proteins of the 50S ribosomal subunit, although it is not seen to bind rRNA by itself. It is important during the early stages of 50S assembly. The protein is Large ribosomal subunit protein uL13 of Mannheimia succiniciproducens (strain KCTC 0769BP / MBEL55E).